Reading from the N-terminus, the 184-residue chain is (2E)-enoyl-[ACP] glycyltransferase (184 aa).

Belongs to the FcoT family.

The enzyme catalyses a (3R)-3-[(carboxymethyl)amino]fatty acid + holo-[ACP] + H(+) = a (2E)-enoyl-[ACP] + glycine + H2O. It carries out the reaction (3R)-3-[(carboxylmethyl)amino]decanoate + holo-[ACP] + H(+) = (2E)-decenoyl-[ACP] + glycine + H2O. In terms of biological role, involved in the biosynthesis of a unique class of isonitrile lipopeptides (INLPs) that seem to play a role in metal acquisition in M.marinum. Catalyzes a Michael addition of glycine to the beta-position of an alpha,beta-unsaturated fatty acyl-[ACP], producing a (3R)-3-[(carboxymethyl)amino]fatty acid. Acts on the (2E)-decenoyl moiety loaded on the acyl-carrier protein MmaB, forming the product (3R)-3-[(carboxymethyl)amino]decanoate released from MmaB. The protein is (2E)-enoyl-[ACP] glycyltransferase of Mycobacterium marinum (strain ATCC BAA-535 / M).